The following is a 423-amino-acid chain: Keratin, type I cytoskeletal 18 (423 aa).

The residue at position 2 (serine 2) is an N-acetylserine. Residues 2 to 71 (SFTTRSTTFS…GLAGMGGVQT (70 aa)) form a head region. Residues serine 7, serine 11, serine 16, and serine 19 each carry the phosphoserine modification. Phosphoserine; alternate is present on residues serine 31 and serine 32. O-linked (GlcNAc) serine; alternate glycosylation is found at serine 31 and serine 32. Serine 35 carries the post-translational modification Phosphoserine. Tyrosine 37 bears the Phosphotyrosine mark. Residue serine 43 is modified to Phosphoserine. Residue arginine 46 is modified to Omega-N-methylarginine. Serine 50 is subject to Phosphoserine; alternate. A glycan (O-linked (GlcNAc) serine; alternate) is linked at serine 50. Position 52 is a phosphoserine; by MAPKAPK2 and MAPKAPK3 (serine 52). Phosphoserine is present on residues serine 57 and serine 60. The necessary for interaction with PNN stretch occupies residues 62 to 366 (GLAGMGGVQT…EALLNIKVKL (305 aa)). An interaction with TRADD region spans residues 69–121 (VQTEKETMQDLNDRLASYLDKVKNLETENRRLESKIREYLEKRGPQGVRDWGH). A coil 1A region spans residues 72 to 107 (EKETMQDLNDRLASYLDKVKNLETENRRLESKIREY). In terms of domain architecture, IF rod spans 72–384 (EKETMQDLND…RLLEDGDDFS (313 aa)). Lysine 73 is covalently cross-linked (Glycyl lysine isopeptide (Lys-Gly) (interchain with G-Cter in SUMO2)). Position 85 is a phosphoserine (serine 85). A linker 1 region spans residues 108-125 (LEKRGPQGVRDWGHYFKT). Lysine 124 is subject to N6-acetyllysine. A coil 1B region spans residues 126–217 (IEDLRAQIFA…KNHEEEVQGL (92 aa)). Residues serine 137 and serine 170 each carry the phosphoserine modification. The linker 12 stretch occupies residues 218-241 (EAQIASSGLTVEVDAPKSQDLSKI). The interaction with DNAJB6 stretch occupies residues 236-384 (QDLSKIMADI…RLLEDGDDFS (149 aa)). Lysine 240 participates in a covalent cross-link: Glycyl lysine isopeptide (Lys-Gly) (interchain with G-Cter in SUMO2). Residues 242-380 (MADIRAQYEQ…ATYRRLLEDG (139 aa)) form a coil 2 region. Threonine 295 carries the phosphothreonine modification. Residues lysine 363 and lysine 365 each participate in a glycyl lysine isopeptide (Lys-Gly) (interchain with G-Cter in SUMO2) cross-link. A tail region spans residues 381–423 (DDFSLNDALDSSNSMQTVQRTTTRKVVDGKVVSETNDTRVLRH). Residues serine 384, serine 391, serine 392, and serine 394 each carry the phosphoserine modification. Residue threonine 397 is modified to Phosphothreonine. Lysine 410 participates in a covalent cross-link: Glycyl lysine isopeptide (Lys-Gly) (interchain with G-Cter in SUMO2).

This sequence belongs to the intermediate filament family. As to quaternary structure, heterotetramer of two type I and two type II keratins. KRT18 associates with KRT8. Interacts with PNN and mutated CFTR. Interacts with YWHAE, YWHAH and YWHAZ only when phosphorylated. Interacts with DNAJB6, TCHP and TRADD. Interacts with the thrombin-antithrombin complex. Interacts with FAM83H. Interacts with EPPK1. Interacts with PKP1 and PKP2. Post-translationally, phosphorylation increases by IL-6. In terms of processing, proteolytically cleaved by caspases during epithelial cell apoptosis. Cleavage occurs at Asp-231 by either caspase-3, caspase-6 or caspase-7. Dephosphorylated by ethanol. Post-translationally, O-GlcNAcylation increases solubility, and decreases stability by inducing proteasomal degradation. Expressed on the plasma membrane of hepatocytes and in the narrow apical portions of supporting cells in the vomeronasal sensory epithelium. Detected in the type III alveolar cells of the lung, in the proliferative crypt epithelium of the small intestine and in the older intragemmal cells of the tongue.

Its subcellular location is the nucleus matrix. The protein localises to the cytoplasm. It localises to the perinuclear region. It is found in the nucleus. The protein resides in the nucleolus. In terms of biological role, when phosphorylated, plays a role in filament reorganization. Involved in the delivery of mutated CFTR to the plasma membrane. Together with KRT8, is involved in interleukin-6 (IL-6)-mediated barrier protection. Involved in the uptake of thrombin-antithrombin complexes by hepatic cells. The chain is Keratin, type I cytoskeletal 18 from Rattus norvegicus (Rat).